Here is a 495-residue protein sequence, read N- to C-terminus: Aspartyl/glutamyl-tRNA(Asn/Gln) amidotransferase subunit B (495 aa).

This sequence belongs to the GatB/GatE family. GatB subfamily. In terms of assembly, heterotrimer of A, B and C subunits.

It carries out the reaction L-glutamyl-tRNA(Gln) + L-glutamine + ATP + H2O = L-glutaminyl-tRNA(Gln) + L-glutamate + ADP + phosphate + H(+). It catalyses the reaction L-aspartyl-tRNA(Asn) + L-glutamine + ATP + H2O = L-asparaginyl-tRNA(Asn) + L-glutamate + ADP + phosphate + 2 H(+). In terms of biological role, allows the formation of correctly charged Asn-tRNA(Asn) or Gln-tRNA(Gln) through the transamidation of misacylated Asp-tRNA(Asn) or Glu-tRNA(Gln) in organisms which lack either or both of asparaginyl-tRNA or glutaminyl-tRNA synthetases. The reaction takes place in the presence of glutamine and ATP through an activated phospho-Asp-tRNA(Asn) or phospho-Glu-tRNA(Gln). This chain is Aspartyl/glutamyl-tRNA(Asn/Gln) amidotransferase subunit B, found in Gloeothece citriformis (strain PCC 7424) (Cyanothece sp. (strain PCC 7424)).